The chain runs to 471 residues: Light-independent protochlorophyllide reductase subunit N (471 aa).

[4Fe-4S] cluster contacts are provided by Cys22, Cys47, and Cys107.

It belongs to the BchN/ChlN family. In terms of assembly, protochlorophyllide reductase is composed of three subunits; ChlL, ChlN and ChlB. Forms a heterotetramer of two ChlB and two ChlN subunits. [4Fe-4S] cluster is required as a cofactor.

It is found in the plastid. Its subcellular location is the chloroplast. The catalysed reaction is chlorophyllide a + oxidized 2[4Fe-4S]-[ferredoxin] + 2 ADP + 2 phosphate = protochlorophyllide a + reduced 2[4Fe-4S]-[ferredoxin] + 2 ATP + 2 H2O. The protein operates within porphyrin-containing compound metabolism; chlorophyll biosynthesis (light-independent). Functionally, component of the dark-operative protochlorophyllide reductase (DPOR) that uses Mg-ATP and reduced ferredoxin to reduce ring D of protochlorophyllide (Pchlide) to form chlorophyllide a (Chlide). This reaction is light-independent. The NB-protein (ChlN-ChlB) is the catalytic component of the complex. The sequence is that of Light-independent protochlorophyllide reductase subunit N from Huperzia lucidula (Shining clubmoss).